Here is a 255-residue protein sequence, read N- to C-terminus: MTPLRIAFYASKRPEAQQVLPQLRDKYGHYSEEEADVIVALGGDGAMLDTLRRRFDDGKPVYGMHLGTVGFLMNDFHADGLPERIEAAERATLSPLRMQATDLDGTVHRAMAINEISLLRQTAQSARLKIIVDGRVRMEELVCDGLMVATPAGSTAYNLSAHGPILPIGAKLLALTPVSAFRPRRWRGALLKAEARVDIEVVAPDRRPVSASADNEEVRNIAKVTVETDPARTLKVLFDPGHALDERILREQFAF.

D44 (proton acceptor) is an active-site residue. NAD(+)-binding positions include 44–45, 114–115, D144, A152, and 155–160; these read DG, NE, and TAYNLS.

The protein belongs to the NAD kinase family. The cofactor is a divalent metal cation.

The protein resides in the cytoplasm. The enzyme catalyses NAD(+) + ATP = ADP + NADP(+) + H(+). Its function is as follows. Involved in the regulation of the intracellular balance of NAD and NADP, and is a key enzyme in the biosynthesis of NADP. Catalyzes specifically the phosphorylation on 2'-hydroxyl of the adenosine moiety of NAD to yield NADP. This Hyphomonas neptunium (strain ATCC 15444) protein is NAD kinase.